A 130-amino-acid chain; its full sequence is Glycine cleavage system H protein (130 aa).

In terms of domain architecture, Lipoyl-binding spans 25–107; it reads IATIGITEFA…YGEGWFLKVR (83 aa). Lys-66 is subject to N6-lipoyllysine.

Belongs to the GcvH family. In terms of assembly, the glycine cleavage system is composed of four proteins: P, T, L and H. (R)-lipoate serves as cofactor.

The glycine cleavage system catalyzes the degradation of glycine. The H protein shuttles the methylamine group of glycine from the P protein to the T protein. In Trichormus variabilis (strain ATCC 29413 / PCC 7937) (Anabaena variabilis), this protein is Glycine cleavage system H protein.